Consider the following 297-residue polypeptide: MKRPDYRTLQALDAVIRERGFERAAQKLCITQSAVSQRIKQLENMFGQPLLVRTVPPRPTEQGQKLLALLRQVELLEEEWLGDEQTGSTPLLLSLAVNADSLATWLLPALAPVLADSPIRLNLQVEDETRTQERLRRGEVVGAVSIQHQALPSCLVDKLGALDYLFVASKPFAERYFPNGVTRSSLLKAPAVAFDHLDDMHQAFLQQNFDLPPGSVPCHIVNSSEAFVQLARQGTACCMIPHLQIEKELESGELINLTPGLLQRRMLYWHRFAPESRMMRKVTDALLEYGHKVLRQD.

Positions 4 to 60 (PDYRTLQALDAVIRERGFERAAQKLCITQSAVSQRIKQLENMFGQPLLVRTVPPRPT) constitute an HTH lysR-type domain. The H-T-H motif DNA-binding region spans 21-40 (FERAAQKLCITQSAVSQRIK).

This sequence belongs to the LysR transcriptional regulatory family. Homodimer.

Controls the transcription of genes involved in arginine and lysine metabolism. This chain is HTH-type transcriptional regulator ArgP, found in Salmonella typhi.